Here is a 319-residue protein sequence, read N- to C-terminus: Geranylgeranyl pyrophosphate synthase (319 aa).

3 residues coordinate isopentenyl diphosphate: Lys42, Arg45, and His74. The Mg(2+) site is built by Asp81 and Asp85. Arg90 provides a ligand contact to dimethylallyl diphosphate. Arg91 is a binding site for isopentenyl diphosphate. Positions 172, 173, 210, 226, and 236 each coordinate dimethylallyl diphosphate.

The protein belongs to the FPP/GGPP synthase family. Homodimer. It depends on Mg(2+) as a cofactor.

The enzyme catalyses isopentenyl diphosphate + dimethylallyl diphosphate = (2E)-geranyl diphosphate + diphosphate. It carries out the reaction isopentenyl diphosphate + (2E)-geranyl diphosphate = (2E,6E)-farnesyl diphosphate + diphosphate. It catalyses the reaction isopentenyl diphosphate + (2E,6E)-farnesyl diphosphate = (2E,6E,10E)-geranylgeranyl diphosphate + diphosphate. It participates in isoprenoid biosynthesis; geranyl diphosphate biosynthesis; geranyl diphosphate from dimethylallyl diphosphate and isopentenyl diphosphate: step 1/1. The protein operates within isoprenoid biosynthesis; farnesyl diphosphate biosynthesis; farnesyl diphosphate from geranyl diphosphate and isopentenyl diphosphate: step 1/1. It functions in the pathway isoprenoid biosynthesis; geranylgeranyl diphosphate biosynthesis; geranylgeranyl diphosphate from farnesyl diphosphate and isopentenyl diphosphate: step 1/1. Its function is as follows. Catalyzes the addition of 3 molecules of isopentenyl diphosphate (IPP) onto dimethylallyl diphosphate (DMAPP) to form geranylgeranyl pyrophosphate (GGPP). Catalyzes the synthesis of geranylgeranyl pyrophosphate as a major product and of farnesyl pyrophosphate in smaller amounts. The sequence is that of Geranylgeranyl pyrophosphate synthase from Geoglobus acetivorans.